We begin with the raw amino-acid sequence, 492 residues long: Glutamyl-tRNA(Gln) amidotransferase subunit A (492 aa).

Residues lysine 78 and serine 158 each act as charge relay system in the active site. Serine 182 acts as the Acyl-ester intermediate in catalysis.

The protein belongs to the amidase family. GatA subfamily. In terms of assembly, heterotrimer of A, B and C subunits.

It carries out the reaction L-glutamyl-tRNA(Gln) + L-glutamine + ATP + H2O = L-glutaminyl-tRNA(Gln) + L-glutamate + ADP + phosphate + H(+). Its function is as follows. Allows the formation of correctly charged Gln-tRNA(Gln) through the transamidation of misacylated Glu-tRNA(Gln) in organisms which lack glutaminyl-tRNA synthetase. The reaction takes place in the presence of glutamine and ATP through an activated gamma-phospho-Glu-tRNA(Gln). The polypeptide is Glutamyl-tRNA(Gln) amidotransferase subunit A (Rhodopseudomonas palustris (strain BisA53)).